We begin with the raw amino-acid sequence, 475 residues long: MLCRRRRVGAAVRWLSRLAPPAPAEADPVVVRVDGSNVARLGKPKPGPRPRQLLSLPPFPGGGDGDPLPGRKAAAPRRVTAVSWVKHYLADVPQEVVQAHFNKRLVYSECSDHEVSVETIKSQKHHLKKIKHNDVMEPGMRIHLPVSVAEGEIKKRYETIPTATLHPNKDEIEYLRRLVIHKDSAILVLNKPPKVPMKGNLPVHNSMDVLAAAALSYGNEEGPKLVHRLDRESSGLLLFGRTKESFTRLHWLFTSVNLAKTNSQVWNAACEAYMQRYWALVIGTPKEREGIISAPLSKVLLDDGKAERVILAHPSGIDGAQEAVTAYRVMGPTIHGCSWIELRPLTGRKHQLRVHCAEALGTPIVGDYKYGWFVHQRWKQNPQPDFEPFTGEPYKLRRPEGLEIQKGSVLSKVPLLHLHCREMVIPNIAKFLSSNGEWHENGAPWSKEKPNLLRFIAPMPAHMKISWNIMSSYLV.

A mitochondrion-targeting transit peptide spans 1-15 (MLCRRRRVGAAVRWL). A disordered region spans residues 40–74 (RLGKPKPGPRPRQLLSLPPFPGGGDGDPLPGRKAA). Residues 90 to 160 (ADVPQEVVQA…GEIKKRYETI (71 aa)) enclose the S4 RNA-binding domain. Aspartate 230 is an active-site residue.

Belongs to the pseudouridine synthase RluA family.

It is found in the mitochondrion. The catalysed reaction is a uridine in RNA = a pseudouridine in RNA. This chain is RNA pseudouridine synthase 3, mitochondrial, found in Oryza sativa subsp. japonica (Rice).